Here is a 1670-residue protein sequence, read N- to C-terminus: Hemolymph clottable protein (1670 aa).

The first 14 residues, Met1–Ala14, serve as a signal peptide directing secretion. The tract at residues Leu15–Tyr674 is vittelogenin. In terms of domain architecture, Vitellogenin spans Leu15 to Leu764. Residue Asn106 is glycosylated (N-linked (GlcNAc...) asparagine). The segment covering Ser198–Ser231 has biased composition (low complexity). The segment at Ser198–Ala236 is disordered. N-linked (GlcNAc...) asparagine glycans are attached at residues Asn319, Asn459, and Asn1301. Positions Val1390–Ala1550 constitute a VWFD domain. Intrachain disulfides connect Cys1392/Cys1513 and Cys1414/Cys1549.

In terms of assembly, homodimer; disulfide-linked. Also exists as oligomers. Glycosylated. Contains mannose and N-acetylglucosamine. In terms of processing, substrate of transglutaminase. In terms of tissue distribution, widely expressed with highest levels in gill and heart. Not expressed in hemocytes.

The protein resides in the secreted. In terms of biological role, forms stable clots in the presence of calcium. The polypeptide is Hemolymph clottable protein (Penaeus monodon (Giant tiger prawn)).